The following is a 387-amino-acid chain: 1-deoxy-D-xylulose 5-phosphate reductoisomerase (387 aa).

Positions 11, 12, 13, 14, 37, 39, and 123 each coordinate NADPH. Lys-124 serves as a coordination point for 1-deoxy-D-xylulose 5-phosphate. An NADPH-binding site is contributed by Glu-125. Mn(2+) is bound at residue Asp-147. 1-deoxy-D-xylulose 5-phosphate is bound by residues Ser-148, Glu-149, Ser-173, and His-196. Glu-149 is a Mn(2+) binding site. Position 202 (Gly-202) interacts with NADPH. 1-deoxy-D-xylulose 5-phosphate is bound by residues Ser-209, Asn-214, Lys-215, and Glu-218. Mn(2+) is bound at residue Glu-218.

The protein belongs to the DXR family. Requires Mg(2+) as cofactor. Mn(2+) is required as a cofactor.

It carries out the reaction 2-C-methyl-D-erythritol 4-phosphate + NADP(+) = 1-deoxy-D-xylulose 5-phosphate + NADPH + H(+). The protein operates within isoprenoid biosynthesis; isopentenyl diphosphate biosynthesis via DXP pathway; isopentenyl diphosphate from 1-deoxy-D-xylulose 5-phosphate: step 1/6. Catalyzes the NADPH-dependent rearrangement and reduction of 1-deoxy-D-xylulose-5-phosphate (DXP) to 2-C-methyl-D-erythritol 4-phosphate (MEP). This chain is 1-deoxy-D-xylulose 5-phosphate reductoisomerase, found in Corynebacterium diphtheriae (strain ATCC 700971 / NCTC 13129 / Biotype gravis).